Consider the following 202-residue polypeptide: Large ribosomal subunit protein uL4 (202 aa).

Residues G42 to V52 are compositionally biased toward polar residues. Residues G42 to G70 are disordered.

The protein belongs to the universal ribosomal protein uL4 family. As to quaternary structure, part of the 50S ribosomal subunit.

In terms of biological role, one of the primary rRNA binding proteins, this protein initially binds near the 5'-end of the 23S rRNA. It is important during the early stages of 50S assembly. It makes multiple contacts with different domains of the 23S rRNA in the assembled 50S subunit and ribosome. Functionally, forms part of the polypeptide exit tunnel. This chain is Large ribosomal subunit protein uL4, found in Xylella fastidiosa (strain Temecula1 / ATCC 700964).